Reading from the N-terminus, the 96-residue chain is Putative toxin Y4kP (96 aa).

The protein belongs to the RelE toxin family.

In terms of biological role, toxic component of a type II toxin-antitoxin (TA) system. This Sinorhizobium fredii (strain NBRC 101917 / NGR234) protein is Putative toxin Y4kP.